A 317-amino-acid chain; its full sequence is Alkylsulfatase (317 aa).

Position 78 (His78) interacts with substrate. Positions 105 and 107 each coordinate Fe cation. Residue Val108 coordinates substrate. Thr132 provides a ligand contact to 2-oxoglutarate. Fe cation is bound at residue His261. 2 residues coordinate 2-oxoglutarate: Arg272 and Arg276.

The protein belongs to the TfdA dioxygenase family. As to quaternary structure, homotetramer. Requires Fe(2+) as cofactor.

Alpha-ketoglutarate-dependent dioxygenase that in vitro catalyzes the oxygenolytic release of sulfite from hexylsulfate. In Acinetobacter baylyi (strain ATCC 33305 / BD413 / ADP1), this protein is Alkylsulfatase.